We begin with the raw amino-acid sequence, 235 residues long: Protein GrpE (235 aa).

2 stretches are compositionally biased toward basic and acidic residues: residues 1–16 (MENK…HEKN) and 24–35 (NNVKKENLHEDQ). The interval 1–51 (MENKNQKHNNEFHEKNQQSQKDNNNVKKENLHEDQSDLNDANFDDGGKKNK) is disordered.

The protein belongs to the GrpE family. In terms of assembly, homodimer.

Its subcellular location is the cytoplasm. Its function is as follows. Participates actively in the response to hyperosmotic and heat shock by preventing the aggregation of stress-denatured proteins, in association with DnaK and GrpE. It is the nucleotide exchange factor for DnaK and may function as a thermosensor. Unfolded proteins bind initially to DnaJ; upon interaction with the DnaJ-bound protein, DnaK hydrolyzes its bound ATP, resulting in the formation of a stable complex. GrpE releases ADP from DnaK; ATP binding to DnaK triggers the release of the substrate protein, thus completing the reaction cycle. Several rounds of ATP-dependent interactions between DnaJ, DnaK and GrpE are required for fully efficient folding. The polypeptide is Protein GrpE (Malacoplasma penetrans (strain HF-2) (Mycoplasma penetrans)).